The chain runs to 211 residues: MKLNKKGLLIILSGPSGVGKATVRKALFEMTNHNFVYSVSATTRKPRPGEQDGKDYHFLTKEEFEKGIENNCFLEWAKFIDHYYGTPKKQIQDFLKQGKEVFLEIEVEGATHLRKKRMPNTVFIFLVPPKKKDLYDRLKKRGTEQEINIVQRIAKANNEFRLAHKYDYIVVNDEVANAADRIIAIIRAEHAKTKRSIRNYLKILEDNVYAE.

In terms of domain architecture, Guanylate kinase-like spans 7–187; the sequence is GLLIILSGPS…AADRIIAIIR (181 aa). Residue 14–21 coordinates ATP; that stretch reads GPSGVGKA.

This sequence belongs to the guanylate kinase family.

It is found in the cytoplasm. It catalyses the reaction GMP + ATP = GDP + ADP. Essential for recycling GMP and indirectly, cGMP. The chain is Guanylate kinase from Aster yellows witches'-broom phytoplasma (strain AYWB).